A 132-amino-acid chain; its full sequence is Fumarate reductase subunit C (132 aa).

The next 3 membrane-spanning stretches (helical) occupy residues 36 to 56 (AIPTLWFCLVLLYGVISLGSL), 70 to 90 (IVIILNIITLGAMLLNTVTYY), and 110 to 130 (IITMALWAVTAFISLVILVFM).

Belongs to the FrdC family. As to quaternary structure, part of an enzyme complex containing four subunits: a flavoprotein (FrdA), an iron-sulfur protein (FrdB), and two hydrophobic anchor proteins (FrdC and FrdD).

It is found in the cell inner membrane. Anchors the catalytic components of the fumarate reductase complex to the cell membrane, binds quinones. The sequence is that of Fumarate reductase subunit C from Pasteurella multocida (strain Pm70).